Here is a 434-residue protein sequence, read N- to C-terminus: MESPSFSKPVQSATVIVGTQFGDEGKGKLVDYLSDKYDIVVRYQGGANAGHTICFDNKTIVLHLLPSGIFHEGCVCVIGNGVVIDPAALLDEIRKVEELGYEVKGRLFISHNAHLIMPYHKRLDSLHEDAQGDQKIGTTGRGIGPSYEDKFARKGIRVVDLLNPEVLQEKLRDNLAAKNKLLKTIYEKEEFDIDAMVKEYAEFDKIIDPYVTNTQLYLNRQLKAGKTVLLEGAQGCLLDVDHGTYPYVTSSNPTSGGACTGSGIAPNYIGKVIGICKAYMTRVGNGAFPSELSDETGERLGQIGHEFGATTGRKRRCGWIDLVALRYSLAVNGVTEIALTKLDVLDTFEEISVCTSYMLDGKEIQDFPTDHQTLSRVTPVFKTMKGWKATNADARTFDEMRPEARNYVTFLEEELQVPVTFISVGPGRDETVFR.

GTP-binding positions include 22-28 and 50-52; these read GDEGKGK and GHT. The active-site Proton acceptor is D23. 2 residues coordinate Mg(2+): D23 and G50. Residues 23–26, 48–51, T139, R153, Q234, T249, and R313 contribute to the IMP site; these read DEGK and NAGH. The active-site Proton donor is the H51. A substrate-binding site is contributed by 309–315; it reads ATTGRKR. GTP is bound by residues R315, 341-343, and 423-425; these read KLD and SVG.

This sequence belongs to the adenylosuccinate synthetase family. In terms of assembly, homodimer. Mg(2+) serves as cofactor.

It is found in the cytoplasm. It catalyses the reaction IMP + L-aspartate + GTP = N(6)-(1,2-dicarboxyethyl)-AMP + GDP + phosphate + 2 H(+). The protein operates within purine metabolism; AMP biosynthesis via de novo pathway; AMP from IMP: step 1/2. In terms of biological role, plays an important role in the de novo pathway of purine nucleotide biosynthesis. Catalyzes the first committed step in the biosynthesis of AMP from IMP. The chain is Adenylosuccinate synthetase from Chlorobium phaeobacteroides (strain DSM 266 / SMG 266 / 2430).